Reading from the N-terminus, the 62-residue chain is Large ribosomal subunit protein bL32 (62 aa).

The span at 1-16 (MAVPKRKTSPMKRGFR) shows a compositional bias: basic residues. The tract at residues 1-62 (MAVPKRKTSP…QILTPKNKEA (62 aa)) is disordered. The segment covering 28-44 (VEDKDSGELRRPHHVDL) has biased composition (basic and acidic residues).

It belongs to the bacterial ribosomal protein bL32 family.

This is Large ribosomal subunit protein bL32 from Methylocella silvestris (strain DSM 15510 / CIP 108128 / LMG 27833 / NCIMB 13906 / BL2).